A 261-amino-acid chain; its full sequence is Cathepsin G (261 aa).

The signal sequence occupies residues 1–18 (MQPLLLLLTFILLQGDEA). Residues 19 to 20 (GK) constitute a propeptide, activation peptide. Positions 21 to 25 (IIGGR) are important for antimicrobial activity. The 223-residue stretch at 21-243 (IIGGREARPH…FMPWIKRTMR (223 aa)) folds into the Peptidase S1 domain. Residues Cys49 and Cys65 are joined by a disulfide bond. The active-site Charge relay system is His64. N-linked (GlcNAc...) asparagine glycosylation is present at Asn71. The tract at residues 97-111 (HPDYNPQNIRNDIML) is important for antimicrobial activity. Asp108 acts as the Charge relay system in catalysis. 2 disulfides stabilise this stretch: Cys142–Cys207 and Cys172–Cys186. The active-site Charge relay system is Ser201.

The protein belongs to the peptidase S1 family. As to expression, in adult, detected only in bone marrow where expression is restricted to a small population of early myeloid cells.

Its subcellular location is the cell membrane. It is found in the cytoplasmic granule. The protein localises to the secreted. It localises to the cytoplasm. The protein resides in the cytosol. Its subcellular location is the lysosome. It is found in the nucleus. The catalysed reaction is Specificity similar to chymotrypsin C.. Its activity is regulated as follows. Inhibited by chymostatin, phenylmethanesulfonyl fluoride and diisopropyl fluorophosphate. In terms of biological role, serine protease with trypsin- and chymotrypsin-like specificity. Also displays antibacterial activity against Gram-negative and Gram-positive bacteria independent of its protease activity. Prefers Phe and Tyr residues in the P1 position of substrates but also cleaves efficiently after Trp and Leu. Shows a preference for negatively charged amino acids in the P2' position and for aliphatic amino acids both upstream and downstream of the cleavage site. Required for recruitment and activation of platelets which is mediated by the F2RL3/PAR4 platelet receptor. Binds reversibly to and stimulates B cells and CD4(+) and CD8(+) T cells. Also binds reversibly to natural killer (NK) cells and enhances NK cell cytotoxicity through its protease activity. Cleaves complement C3. Cleaves vimentin. Cleaves thrombin receptor F2R/PAR1. Cleaves the synovial mucin-type protein PRG4/lubricin. Cleaves and activates IL36G which promotes expression of chemokines CXCL1 and CXLC8 in keratinocytes. Cleaves IL33 into mature forms which have greater activity than the unprocessed form. Cleaves coagulation factor F8 to produce a partially activated form. Also cleaves and activates coagulation factor F10. Cleaves leukocyte cell surface protein SPN/CD43 to release its extracellular domain and trigger its intramembrane proteolysis by gamma-secretase, releasing the CD43 cytoplasmic tail chain (CD43-ct) which translocates to the nucleus. During apoptosis, cleaves SMARCA2/BRM to produce a 160 kDa cleavage product which localizes to the cytosol. Cleaves MBP in B cell lysosomes at '221-Phe-|-Lys-222', degrading the major immunogenic MBP epitope and preventing the activation of MBP-specific autoreactive T cells. Cleaves annexin ANXA1 and antimicrobial peptide CAMP to produce peptides which act on neutrophil N-formyl peptide receptors to enhance the release of CXCL2. Acts as a ligand for the N-formyl peptide receptor FPR1, enhancing phagocyte chemotaxis. Has antibacterial activity against the Gram-negative bacteria N.gonorrhoeae and P.aeruginosa. Likely to act against N.gonorrhoeae by interacting with N.gonorrhoeae penA/PBP2. Exhibits potent antimicrobial activity against the Gram-positive bacterium L.monocytogenes. Has antibacterial activity against the Gram-positive bacterium S.aureus and degrades S.aureus biofilms, allowing polymorphonuclear leukocytes to penetrate the biofilm and phagocytose bacteria. Has antibacterial activity against M.tuberculosis. Induces platelet aggregation which is strongly potentiated in the presence of ELANE. This Mus musculus (Mouse) protein is Cathepsin G (Ctsg).